Here is a 265-residue protein sequence, read N- to C-terminus: Thymidine kinase 2, mitochondrial (265 aa).

The N-terminal 33 residues, 1–33 (MLLRPLRGWAALALRCFEPGSPGSPASGPGSRR), are a transit peptide targeting the mitochondrion. Over residues 21–31 (SPGSPASGPGS) the composition is skewed to low complexity. The interval 21–45 (SPGSPASGPGSRRVQRGAWPSDKER) is disordered. 57 to 65 (GNIASGKTT) contributes to the ATP binding site. Glutamate 133 functions as the Proton acceptor in the catalytic mechanism.

It belongs to the DCK/DGK family. Homodimer.

It localises to the mitochondrion. It catalyses the reaction thymidine + ATP = dTMP + ADP + H(+). The catalysed reaction is 2'-deoxycytidine + ATP = dCMP + ADP + H(+). It carries out the reaction 2'-deoxyuridine + ATP = dUMP + ADP + H(+). In terms of biological role, phosphorylates thymidine, deoxycytidine, and deoxyuridine in the mitochondrial matrix. In non-replicating cells, where cytosolic dNTP synthesis is down-regulated, mtDNA synthesis depends solely on TK2 and DGUOK. In Macaca fascicularis (Crab-eating macaque), this protein is Thymidine kinase 2, mitochondrial (TK2).